Consider the following 94-residue polypeptide: Small ribosomal subunit protein uS19 (94 aa).

The protein belongs to the universal ribosomal protein uS19 family.

Functionally, protein S19 forms a complex with S13 that binds strongly to the 16S ribosomal RNA. This is Small ribosomal subunit protein uS19 from Elusimicrobium minutum (strain Pei191).